We begin with the raw amino-acid sequence, 357 residues long: Protein-arginine kinase (357 aa).

The 233-residue stretch at 24 to 256 (VIISSRVRLA…LQLVTQERAA (233 aa)) folds into the Phosphagen kinase C-terminal domain. Residues 27–31 (SSRVR), His-93, Arg-127, 178–182 (RASVM), and 209–214 (RGLYGE) contribute to the ATP site. An RDXXRA motif of the pArg binding pocket involved in allosteric regulation motif is present at residues 339–344 (RDIFRA).

It belongs to the ATP:guanido phosphotransferase family.

It carries out the reaction L-arginyl-[protein] + ATP = N(omega)-phospho-L-arginyl-[protein] + ADP + H(+). Appears to be allosterically activated by the binding of pArg-containing polypeptides to the pArg-binding pocket localized in the C-terminal domain of McsB. In terms of biological role, catalyzes the specific phosphorylation of arginine residues in proteins. The polypeptide is Protein-arginine kinase (Desulforamulus reducens (strain ATCC BAA-1160 / DSM 100696 / MI-1) (Desulfotomaculum reducens)).